The chain runs to 171 residues: 3-hydroxydecanoyl-[acyl-carrier-protein] dehydratase (171 aa).

Residue histidine 71 is part of the active site.

This sequence belongs to the thioester dehydratase family. FabA subfamily. Homodimer.

The protein localises to the cytoplasm. The catalysed reaction is a (3R)-hydroxyacyl-[ACP] = a (2E)-enoyl-[ACP] + H2O. The enzyme catalyses (3R)-hydroxydecanoyl-[ACP] = (2E)-decenoyl-[ACP] + H2O. It catalyses the reaction (2E)-decenoyl-[ACP] = (3Z)-decenoyl-[ACP]. Its pathway is lipid metabolism; fatty acid biosynthesis. Its function is as follows. Necessary for the introduction of cis unsaturation into fatty acids. Catalyzes the dehydration of (3R)-3-hydroxydecanoyl-ACP to E-(2)-decenoyl-ACP and then its isomerization to Z-(3)-decenoyl-ACP. Can catalyze the dehydratase reaction for beta-hydroxyacyl-ACPs with saturated chain lengths up to 16:0, being most active on intermediate chain length. This is 3-hydroxydecanoyl-[acyl-carrier-protein] dehydratase from Hamiltonella defensa subsp. Acyrthosiphon pisum (strain 5AT).